The primary structure comprises 264 residues: Glutamate racemase (264 aa).

Residues 10–11 (DS) and 42–43 (YG) each bind substrate. Cys-73 (proton donor/acceptor) is an active-site residue. 74–75 (NT) contributes to the substrate binding site. Cys-183 serves as the catalytic Proton donor/acceptor. 184 to 185 (TH) is a binding site for substrate.

The protein belongs to the aspartate/glutamate racemases family.

The catalysed reaction is L-glutamate = D-glutamate. The protein operates within cell wall biogenesis; peptidoglycan biosynthesis. Functionally, provides the (R)-glutamate required for cell wall biosynthesis. The chain is Glutamate racemase from Streptococcus agalactiae serotype III (strain NEM316).